Consider the following 122-residue polypeptide: Large ribosomal subunit protein uL14c (122 aa).

The protein belongs to the universal ribosomal protein uL14 family. As to quaternary structure, part of the 50S ribosomal subunit.

It localises to the plastid. It is found in the chloroplast. Binds to 23S rRNA. The protein is Large ribosomal subunit protein uL14c of Lotus japonicus (Lotus corniculatus var. japonicus).